Here is a 220-residue protein sequence, read N- to C-terminus: Iron-sulfur cluster repair protein YtfE (220 aa).

This sequence belongs to the RIC family. YtfE subfamily. Homodimer.

Its subcellular location is the cytoplasm. Its function is as follows. Di-iron-containing protein involved in the repair of iron-sulfur clusters damaged by oxidative and nitrosative stress conditions. The sequence is that of Iron-sulfur cluster repair protein YtfE from Shigella boydii serotype 4 (strain Sb227).